We begin with the raw amino-acid sequence, 340 residues long: Latency-related protein 1 (340 aa).

Disordered stretches follow at residues 13-96 and 254-340; these read AALW…PNRQ and RLPG…PPRP. 2 repeat units span residues 27-43 and 59-75. The segment at 27–75 is 2 X 17 AA repeats; that stretch reads PTPTHPHSHAPPLPRTPTPSHPHSRAPPLPRAPTPTHPHSHAPPLPRTP. A compositionally biased stretch (pro residues) spans 35-73; that stretch reads HAPPLPRTPTPSHPHSRAPPLPRAPTPTHPHSHAPPLPR. Over residues 287–307 the composition is skewed to gly residues; sequence ARGGGSGGGRGPGGGRGGPRG. The span at 308–326 shows a compositional bias: basic residues; it reads SRGRGGRGRGGRGGGRRGR.

The polypeptide is Latency-related protein 1 (Human herpesvirus 1 (strain F) (HHV-1)).